The sequence spans 603 residues: Alpha-1,2-mannosyltransferase algn-9 (603 aa).

A disordered region spans residues 1-25 (MVTHRRKGGSGPPQKPPPRIVDRSS). At 1-108 (MVTHRRKGGS…EYSPVYAIRS (108 aa)) the chain is on the lumenal side. The chain crosses the membrane as a helical span at residues 109 to 129 (YFYIYLHYIPASLFANLFGDT). A topological domain (cytoplasmic) is located at residue K130. Residues 131–151 (IVVFTLIRLTIGLFCLLGEYY) traverse the membrane as a helical segment. At 152–166 (AFDAICKKINIATGR) the chain is on the lumenal side. The chain crosses the membrane as a helical span at residues 167–187 (FFILFSIFSSGMFLASTAFVP). The Cytoplasmic portion of the chain corresponds to 188 to 195 (SSFCMAIT). The chain crosses the membrane as a helical span at residues 196–216 (FYILGAYLNENWTAGIFCVAF). The Lumenal portion of the chain corresponds to 217 to 218 (ST). The chain crosses the membrane as a helical span at residues 219 to 239 (MVGWPFSAVLGLPIVADMLLL). Residues 240 to 245 (KGLRIR) are Cytoplasmic-facing. A helical transmembrane segment spans residues 246-266 (FILTSLVIGLCIGGVQVITDS). The Lumenal portion of the chain corresponds to 267–310 (HYFGKTVLAPLNIFLYNVVSGPGPSLYGEEPLSFYIKNLFNNWN). Residues 311–331 (IVIFAAPFGFPLSLAYFTKVW) traverse the membrane as a helical segment. Topologically, residues 332–343 (MSQDRNVALYQR) are cytoplasmic. Residues 344–364 (FAPIILLAVTTAAWLLIFGSQ) form a helical membrane-spanning segment. At 365–370 (AHKEER) the chain is on the lumenal side. Residues 371–391 (FLFPIYPFIAFFAALALDATN) traverse the membrane as a helical segment. The Cytoplasmic portion of the chain corresponds to 392–397 (RLCLKK). Residues 398–418 (LGMDNILSILFILCFAILSAS) traverse the membrane as a helical segment. At 419-603 (RTYSIHNNYG…TCTLYRKSNL (185 aa)) the chain is on the lumenal side. An N-linked (GlcNAc...) asparagine glycan is attached at N443.

It belongs to the glycosyltransferase 22 family.

It localises to the endoplasmic reticulum membrane. It catalyses the reaction an alpha-D-Man-(1-&gt;2)-alpha-D-Man-(1-&gt;2)-alpha-D-Man-(1-&gt;3)-[alpha-D-Man-(1-&gt;3)-alpha-D-Man-(1-&gt;6)]-beta-D-Man-(1-&gt;4)-beta-D-GlcNAc-(1-&gt;4)-alpha-D-GlcNAc-diphospho-di-trans,poly-cis-dolichol + a di-trans,poly-cis-dolichyl beta-D-mannosyl phosphate = an alpha-D-Man-(1-&gt;2)-alpha-D-Man-(1-&gt;2)-alpha-D-Man-(1-&gt;3)-[alpha-D-Man-(1-&gt;2)-alpha-D-Man-(1-&gt;3)-alpha-D-Man-(1-&gt;6)]-beta-D-Man-(1-&gt;4)-beta-D-GlcNAc-(1-&gt;4)-alpha-D-GlcNAc-diphospho-di-trans,poly-cis-dolichol + a di-trans,poly-cis-dolichyl phosphate + H(+). The catalysed reaction is an alpha-D-Man-(1-&gt;2)-alpha-D-Man-(1-&gt;2)-alpha-D-Man-(1-&gt;3)-[alpha-D-Man-(1-&gt;2)-alpha-D-Man-(1-&gt;3)-[alpha-D-Man-(1-&gt;6)]-alpha-D-Man-(1-&gt;6)]-beta-D-Man-(1-&gt;4)-beta-D-GlcNAc-(1-&gt;4)-alpha-D-GlcNAc-diphospho-di-trans,poly-cis-dolichol + a di-trans,poly-cis-dolichyl beta-D-mannosyl phosphate = an alpha-D-Man-(1-&gt;2)-alpha-D-Man-(1-&gt;2)-alpha-D-Man-(1-&gt;3)-[alpha-D-Man-(1-&gt;2)-alpha-D-Man-(1-&gt;3)-[alpha-D-Man-(1-&gt;2)-alpha-D-Man-(1-&gt;6)]-alpha-D-Man-(1-&gt;6)]-beta-D-Man-(1-&gt;4)-beta-D-GlcNAc-(1-&gt;4)-alpha-D-GlcNAc-diphospho-di-trans,poly-cis-dolichol + a di-trans,poly-cis-dolichyl phosphate + H(+). It participates in protein modification; protein glycosylation. Its function is as follows. Catalyzes the transfer of mannose from Dol-P-Man to lipid-linked oligosaccharides. This chain is Alpha-1,2-mannosyltransferase algn-9, found in Caenorhabditis elegans.